The primary structure comprises 282 residues: F-box protein VBF (282 aa).

An F-box domain is found at 1 to 44 (MMMLPEACIANILAFTSPADAFSSSEVSSVFRLAGDSDFVWEKF).

In terms of assembly, component of SCF(VBF) E3 ubiquitin ligase complex that interacts with VIP1. Interacts directly with SKP1A and VIP1. Forms a complex composed of VIP1, VBF and Agrobacterium virE2.

In terms of biological role, component of SCF(VBF) E3 ubiquitin ligase complexes, which mediate the ubiquitination and subsequent proteasomal degradation of target proteins such as VIP1 and Agrobacterium virE2, after their implication in T-DNA translocation to the host nucleus (can functionally replace Agrobacterium VirF). Required during Agrobacterium-induced tumor formation. This Arabidopsis thaliana (Mouse-ear cress) protein is F-box protein VBF (VBF).